The following is a 290-amino-acid chain: Proteasome assembly chaperone 1 (290 aa).

A disordered region spans residues 1–39; sequence MAATFFGEVVKAPCRAGTEDEEEEEEEEGRRETPEDREV. An N-acetylalanine modification is found at alanine 2. Residue threonine 18 is modified to Phosphothreonine. Positions 28-39 are enriched in basic and acidic residues; the sequence is EGRRETPEDREV. Threonine 56 carries the phosphothreonine modification. Serine 182 carries the post-translational modification Phosphoserine. Lysine 266 is modified (N6-acetyllysine).

Belongs to the PSMG1 family. In terms of assembly, forms a heterodimer with PSMG2. The PSMG1-PSMG2 heterodimer interacts directly with the PSMA5 and PSMA7 proteasome alpha subunits. Post-translationally, degraded by the proteasome upon completion of 20S proteasome maturation.

It localises to the cytoplasm. It is found in the endoplasmic reticulum. Functionally, chaperone protein which promotes assembly of the 20S proteasome as part of a heterodimer with PSMG2. The PSMG1-PSMG2 heterodimer binds to the PSMA5 and PSMA7 proteasome subunits, promotes assembly of the proteasome alpha subunits into the heteroheptameric alpha ring and prevents alpha ring dimerization. The polypeptide is Proteasome assembly chaperone 1 (PSMG1) (Papio anubis (Olive baboon)).